We begin with the raw amino-acid sequence, 246 residues long: Uridylate kinase (246 aa).

20 to 23 (KISG) serves as a coordination point for ATP. Residues 28–33 (GDQGYG) are involved in allosteric activation by GTP. A UMP-binding site is contributed by Gly62. ATP is bound by residues Gly63 and Arg67. UMP is bound by residues Asp82 and 143–150 (TGNPYFTT). ATP is bound by residues Thr170, Tyr176, and Asp179.

The protein belongs to the UMP kinase family. Homohexamer.

It localises to the cytoplasm. It carries out the reaction UMP + ATP = UDP + ADP. Its pathway is pyrimidine metabolism; CTP biosynthesis via de novo pathway; UDP from UMP (UMPK route): step 1/1. Allosterically activated by GTP. Inhibited by UTP. Functionally, catalyzes the reversible phosphorylation of UMP to UDP. The chain is Uridylate kinase from Cereibacter sphaeroides (strain ATCC 17023 / DSM 158 / JCM 6121 / CCUG 31486 / LMG 2827 / NBRC 12203 / NCIMB 8253 / ATH 2.4.1.) (Rhodobacter sphaeroides).